Consider the following 293-residue polypeptide: Ribonuclease HIII (293 aa).

Residues 78–293 (LPLIGTDEVG…TEKAKKRLER (216 aa)) enclose the RNase H type-2 domain. 3 residues coordinate a divalent metal cation: aspartate 84, glutamate 85, and aspartate 187.

The protein belongs to the RNase HII family. RnhC subfamily. It depends on Mn(2+) as a cofactor. Mg(2+) is required as a cofactor.

The protein resides in the cytoplasm. The enzyme catalyses Endonucleolytic cleavage to 5'-phosphomonoester.. Its function is as follows. Endonuclease that specifically degrades the RNA of RNA-DNA hybrids. The chain is Ribonuclease HIII from Streptococcus pneumoniae (strain 70585).